The chain runs to 369 residues: Epoxyqueuosine reductase (369 aa).

D135 acts as the Proton donor in catalysis. A 4Fe-4S ferredoxin-type domain is found at 177–209 (IPLPVDEPSENQCGKCTACITSCPTNAIVAEGV). C189, C192, C195, C199, C215, C242, C245, and C249 together coordinate [4Fe-4S] cluster.

The protein belongs to the QueG family. Monomer. Cob(II)alamin is required as a cofactor. It depends on [4Fe-4S] cluster as a cofactor.

It is found in the cytoplasm. The enzyme catalyses epoxyqueuosine(34) in tRNA + AH2 = queuosine(34) in tRNA + A + H2O. It functions in the pathway tRNA modification; tRNA-queuosine biosynthesis. Functionally, catalyzes the conversion of epoxyqueuosine (oQ) to queuosine (Q), which is a hypermodified base found in the wobble positions of tRNA(Asp), tRNA(Asn), tRNA(His) and tRNA(Tyr). The protein is Epoxyqueuosine reductase of Vibrio cholerae serotype O1 (strain ATCC 39315 / El Tor Inaba N16961).